Here is a 578-residue protein sequence, read N- to C-terminus: Poly(A) RNA polymerase cid13 (578 aa).

Residues Asp-110 and Asp-112 each coordinate Mg(2+). The region spanning Ser-275–Ser-330 is the PAP-associated domain. The interval Ser-495–His-565 is disordered. Over residues His-496 to Asn-510 the composition is skewed to basic and acidic residues. Positions Arg-516 to Gln-527 are enriched in basic residues. Residues Asn-547 to His-565 show a composition bias toward low complexity.

Belongs to the DNA polymerase type-B-like family. In terms of assembly, interacts with pab1. Mg(2+) is required as a cofactor. It depends on Mn(2+) as a cofactor.

It localises to the cytoplasm. It is found in the nucleus. The enzyme catalyses RNA(n) + ATP = RNA(n)-3'-adenine ribonucleotide + diphosphate. In terms of biological role, polymerase that creates the 3' poly(A) tail of suc22 mRNA. In Schizosaccharomyces pombe (strain 972 / ATCC 24843) (Fission yeast), this protein is Poly(A) RNA polymerase cid13 (cid13).